The sequence spans 259 residues: Type III pantothenate kinase (259 aa).

6 to 13 (DTGNTNTV) contacts ATP. Residue 107–110 (GPDR) coordinates substrate. Asp-109 serves as the catalytic Proton acceptor. A K(+)-binding site is contributed by Asp-129. An ATP-binding site is contributed by Thr-132. Thr-184 contributes to the substrate binding site.

Belongs to the type III pantothenate kinase family. Homodimer. NH4(+) is required as a cofactor. Requires K(+) as cofactor.

The protein localises to the cytoplasm. It catalyses the reaction (R)-pantothenate + ATP = (R)-4'-phosphopantothenate + ADP + H(+). The protein operates within cofactor biosynthesis; coenzyme A biosynthesis; CoA from (R)-pantothenate: step 1/5. In terms of biological role, catalyzes the phosphorylation of pantothenate (Pan), the first step in CoA biosynthesis. This chain is Type III pantothenate kinase, found in Paracoccus denitrificans (strain Pd 1222).